The sequence spans 485 residues: Acyl transferase 1 (485 aa).

His172 (proton acceptor) is an active-site residue.

The protein belongs to the plant acyltransferase family. In terms of tissue distribution, highly expressed in young panicles. Expressed in leaf sheaths and panicles.

Functionally, involved in defense against pathogens. May contribute to disease resistance by potentiating disease resistance signaling, or producing phytoalexin-like secondary products. The protein is Acyl transferase 1 of Oryza sativa subsp. japonica (Rice).